Consider the following 936-residue polypeptide: Coiled-coil domain-containing protein 191 (936 aa).

Coiled-coil stretches lie at residues 189-270 (RLTM…VKAA) and 364-440 (RDYT…LQAA). Residues 495–541 (LGRTTTGNLQGSLQNVSLSAPGNKQHKTLGAEPSQQPGSNETLRTTS) form a disordered region. 2 stretches are compositionally biased toward polar residues: residues 497–516 (RTTT…SAPG) and 527–541 (PSQQ…RTTS). Residues 554 to 592 (NRHVFQQQLIEKQKKKLQEQQKTILELKKNLQLAEAQWA) adopt a coiled-coil conformation. 2 disordered regions span residues 607 to 656 (LSKP…TPHP) and 691 to 714 (KAQE…RKRE). Residues 662–739 (EERAIQRAEC…IKRNQQLEAI (78 aa)) adopt a coiled-coil conformation.

The sequence is that of Coiled-coil domain-containing protein 191 (CCDC191) from Homo sapiens (Human).